The chain runs to 280 residues: Large ribosomal subunit protein uL2 (280 aa).

The disordered stretch occupies residues 223–280; that stretch reads VVMNPVDHPHGGGEGRTSGGRHPVTPWGKPTKGARTRNKNKASSKLIIRSRHAKKKGR. The segment covering 254–280 has biased composition (basic residues); that stretch reads KGARTRNKNKASSKLIIRSRHAKKKGR.

This sequence belongs to the universal ribosomal protein uL2 family. In terms of assembly, part of the 50S ribosomal subunit. Forms a bridge to the 30S subunit in the 70S ribosome.

Its function is as follows. One of the primary rRNA binding proteins. Required for association of the 30S and 50S subunits to form the 70S ribosome, for tRNA binding and peptide bond formation. It has been suggested to have peptidyltransferase activity; this is somewhat controversial. Makes several contacts with the 16S rRNA in the 70S ribosome. The chain is Large ribosomal subunit protein uL2 from Dinoroseobacter shibae (strain DSM 16493 / NCIMB 14021 / DFL 12).